The chain runs to 733 residues: MNPTVELRDIEALVTNLHADPFAILGPHRAEDGGAWVVRTYQPGASRVVLLGESGELAMENRRHPDLFECAVPTAPGAYRLRVEDAWGERLIEDAYRFRGSLLSDLDGHLFAEGNHHRIYEKLGAHPAVFEGVAGVYFAVWAPSARNVSVLGDFNRWDGRFHQMRRVERSTGIWELFIPELGEGTVYKFEIKNGFGHIYEKSDPYAFQQELRPKSGSVVADLDRYSWNDGEWLKRRALSNPLKQPLAIYEVHLGSWMRVPEEGDRFLSYTELADKLIPYVKDLGFTHIELLPILEHPFDGSWGYQVLGYYAPTSRFGNPTEFMAFVDRCHQSGIGVILDWVPAHFPKDGHGLALFDGTHLYEHADSRQGEHKEWGTLVFNYGRNEVRNFLIANALFWFERYHIDGIRVDAVAAMLYLDYSRHDGEWVANRYGGRENLEAIGFLRQLNELIFLYYPGALSIAEESTAWPLVTRPPYLGGLGFNLKWHMGWMHDTLAYFRTDPLFRRYRHNDITFSITYTFYENFVLALSHDEVVHMKGSIIGKMPGDGWQKFANLRALFTFMYGHPGKKTLFMGMEFAHGREWNAYQSLDWHLLDYPQHRQMQQFVRALNRLYTGQPALYEEDCNPAGFFWVDCHDVLNSVFTFVRRGKDPSEQLLFVCNFTPTYHPHYRVGVLETGFWQEIFNSDSGIYGGSNKGNLGGLWSENWAIHGQPYSLGLQLPPLGCLVFKRRKEQD.

Aspartate 409 functions as the Nucleophile in the catalytic mechanism. Residue glutamate 462 is the Proton donor of the active site.

This sequence belongs to the glycosyl hydrolase 13 family. GlgB subfamily. Monomer.

It carries out the reaction Transfers a segment of a (1-&gt;4)-alpha-D-glucan chain to a primary hydroxy group in a similar glucan chain.. It participates in glycan biosynthesis; glycogen biosynthesis. Catalyzes the formation of the alpha-1,6-glucosidic linkages in glycogen by scission of a 1,4-alpha-linked oligosaccharide from growing alpha-1,4-glucan chains and the subsequent attachment of the oligosaccharide to the alpha-1,6 position. This chain is 1,4-alpha-glucan branching enzyme GlgB, found in Gloeobacter violaceus (strain ATCC 29082 / PCC 7421).